A 208-amino-acid polypeptide reads, in one-letter code: GTP-binding protein Rho1 (208 aa).

19–26 (GDGACGKT) provides a ligand contact to GTP. Residues 41 to 49 (YVPTVFDNY) carry the Effector region motif. GTP contacts are provided by residues 66-70 (DTAGQ) and 124-127 (CKAD). The tract at residues 188–208 (GKQGKSKPKTKSSKKKKCVVL) is disordered. Residues 191-208 (GKSKPKTKSSKKKKCVVL) are compositionally biased toward basic residues. Residue Cys-205 is modified to Cysteine methyl ester. Cys-205 carries the S-geranylgeranyl cysteine lipid modification. The propeptide at 206–208 (VVL) is removed in mature form.

The protein belongs to the small GTPase superfamily. Rho family.

It localises to the cell membrane. In Kluyveromyces lactis (strain ATCC 8585 / CBS 2359 / DSM 70799 / NBRC 1267 / NRRL Y-1140 / WM37) (Yeast), this protein is GTP-binding protein Rho1 (RHO1).